The chain runs to 386 residues: TGF-beta-activated kinase 1 and MAP3K7-binding protein 1 (386 aa).

Positions 22–327 (HSCRYSKQKN…EEMTVIYVKL (306 aa)) constitute a PPM-type phosphatase domain.

Interacts with mom-4; the interaction enhances mom-4 kinase activity.

In terms of biological role, involved in the Wnt signaling pathway by regulating mom-4 kinase activity. The sequence is that of TGF-beta-activated kinase 1 and MAP3K7-binding protein 1 from Caenorhabditis elegans.